The sequence spans 340 residues: 4-amino-5-hydroxymethyl-2-methylpyrimidine phosphate synthase THI13 (340 aa).

K62 is modified (N6-(pyridoxal phosphate)lysine). H66 is an active-site residue. Position 115 to 118 (115 to 118) interacts with pyridoxal 5'-phosphate; the sequence is GEFG. A CCCFC; essential for catalytic activity, may be the site of iron coordination motif is present at residues 195–199; it reads CCCFC.

The protein belongs to the NMT1/THI5 family. Homodimer. Requires Fe cation as cofactor.

It catalyses the reaction N(6)-(pyridoxal phosphate)-L-lysyl-[4-amino-5-hydroxymethyl-2-methylpyrimidine phosphate synthase] + L-histidyl-[4-amino-5-hydroxymethyl-2-methylpyrimidine phosphate synthase] + 2 Fe(3+) + 4 H2O = L-lysyl-[4-amino-5-hydroxymethyl-2-methylpyrimidine phosphate synthase] + (2S)-2-amino-5-hydroxy-4-oxopentanoyl-[4-amino-5-hydroxymethyl-2-methylpyrimidine phosphate synthase] + 4-amino-2-methyl-5-(phosphooxymethyl)pyrimidine + 3-oxopropanoate + 2 Fe(2+) + 2 H(+). It participates in cofactor biosynthesis; thiamine diphosphate biosynthesis. Its function is as follows. Responsible for the formation of the pyrimidine heterocycle in the thiamine biosynthesis pathway. Catalyzes the formation of hydroxymethylpyrimidine phosphate (HMP-P) from histidine and pyridoxal phosphate (PLP). The protein uses PLP and the active site histidine to form HMP-P, generating an inactive enzyme. The enzyme can only undergo a single turnover, which suggests it is a suicide enzyme. The sequence is that of 4-amino-5-hydroxymethyl-2-methylpyrimidine phosphate synthase THI13 from Saccharomyces cerevisiae (strain ATCC 204508 / S288c) (Baker's yeast).